The primary structure comprises 422 residues: DNA (cytosine-5)-methyltransferase 3-like (422 aa).

A compositionally biased stretch (polar residues) spans 1–11; it reads MGSRETPSSCS. Residues 1 to 50 are disordered; it reads MGSRETPSSCSKTHETLNLETPESSSTDPDSPLEEQWPKSAPDLKEEDSM. The span at 20–30 shows a compositional bias: low complexity; that stretch reads ETPESSSTDPD. One can recognise an ADD domain in the interval 76-208; the sequence is EVNVNQRNIE…LKAFHDREGA (133 aa). Residues 87–117 form a GATA-type; atypical zinc finger; the sequence is ICLCCGSLQVYAQHPLFEGGICAPCKDKFLE. Residues 128-184 form a PHD-type; atypical zinc finger; the sequence is QSYCTICCSGHTLFICESPDCTRCYCFECVDILVGPGTSERINAMACWVCFLCLPFS.

Homodimer. Heterotetramer composed of 1 DNMT3A homodimer and 2 DNMT3L subunits (DNMT3L-DNMT3A-DNMT3A-DNMT3L). Interacts with histone H3 (via N-terminus); interaction is strongly inhibited by methylation at lysine 4 (H3K4me). Interacts with EZH2; the interaction is direct. Interacts with SPOCD1.

It localises to the nucleus. Functionally, catalytically inactive regulatory factor of DNA methyltransferases that can either promote or inhibit DNA methylation depending on the context. Essential for the function of DNMT3A and DNMT3B: activates DNMT3A and DNMT3B by binding to their catalytic domain. Acts by accelerating the binding of DNA and S-adenosyl-L-methionine (AdoMet) to the methyltransferases and dissociates from the complex after DNA binding to the methyltransferases. Recognizes unmethylated histone H3 lysine 4 (H3K4me0) and induces de novo DNA methylation by recruitment or activation of DNMT3. Plays a key role in embryonic stem cells and germ cells. In germ cells, required for the methylation of imprinted loci together with DNMT3A. In male germ cells, specifically required to methylate retrotransposons, preventing their mobilization. Plays a key role in embryonic stem cells (ESCs) by acting both as an positive and negative regulator of DNA methylation. While it promotes DNA methylation of housekeeping genes together with DNMT3A and DNMT3B, it also acts as an inhibitor of DNA methylation at the promoter of bivalent genes. Interacts with the EZH2 component of the PRC2/EED-EZH2 complex, preventing interaction of DNMT3A and DNMT3B with the PRC2/EED-EZH2 complex, leading to maintain low methylation levels at the promoters of bivalent genes. Promotes differentiation of ESCs into primordial germ cells by inhibiting DNA methylation at the promoter of RHOX5, thereby activating its expression. In Rattus norvegicus (Rat), this protein is DNA (cytosine-5)-methyltransferase 3-like (Dnmt3l).